The following is a 359-amino-acid chain: 3-dehydroquinate synthase (359 aa).

Residues Asp71–Lys76, Gly105–Asp109, Thr129–Thr130, Lys142, and Lys151 each bind NAD(+). Zn(2+) contacts are provided by Glu184, His247, and His263.

This sequence belongs to the sugar phosphate cyclases superfamily. Dehydroquinate synthase family. Requires NAD(+) as cofactor. The cofactor is Co(2+). Zn(2+) serves as cofactor.

The protein localises to the cytoplasm. It catalyses the reaction 7-phospho-2-dehydro-3-deoxy-D-arabino-heptonate = 3-dehydroquinate + phosphate. Its pathway is metabolic intermediate biosynthesis; chorismate biosynthesis; chorismate from D-erythrose 4-phosphate and phosphoenolpyruvate: step 2/7. Functionally, catalyzes the conversion of 3-deoxy-D-arabino-heptulosonate 7-phosphate (DAHP) to dehydroquinate (DHQ). This Leifsonia xyli subsp. xyli (strain CTCB07) protein is 3-dehydroquinate synthase.